Here is a 266-residue protein sequence, read N- to C-terminus: ATG8-interacting protein 2 (266 aa).

The short motif at 14–17 (WEVV) is the AIM (Atg8-family-interacting motif) element. The helical transmembrane segment at 191–210 (TNTVWSICIAAAVMGIVILG) threads the bilayer. An AIM (Atg8-family-interacting motif) motif is present at residues 218–221 (WQIL).

As to quaternary structure, interacts with ATG8F.

The protein localises to the endoplasmic reticulum membrane. It localises to the membrane. Its function is as follows. May be involved in salt stress-induced vesicle-to-vacuole trafficking pathway. Through its interaction with ATG8F, may enable delivery of the vesicle bodies to the vacuole by an autophagic pathway. Plays a role in seed germination in response to exogenous abscisic acid (ABA) treatment. The chain is ATG8-interacting protein 2 from Arabidopsis thaliana (Mouse-ear cress).